We begin with the raw amino-acid sequence, 101 residues long: MSQKIRIKLKSYDHNLVDKSAEKIVRTVKATGAIVSGPIPLPTHKRIFTVNRSTFVNKKSREQFELSSFKRLIDIYSSTAKTVDALMKLELPSGVEVEIKV.

The protein belongs to the universal ribosomal protein uS10 family. In terms of assembly, part of the 30S ribosomal subunit.

Its function is as follows. Involved in the binding of tRNA to the ribosomes. The sequence is that of Small ribosomal subunit protein uS10 from Bacteroides fragilis (strain ATCC 25285 / DSM 2151 / CCUG 4856 / JCM 11019 / LMG 10263 / NCTC 9343 / Onslow / VPI 2553 / EN-2).